We begin with the raw amino-acid sequence, 301 residues long: Ribonuclease H2 subunit A (301 aa).

The residue at position 1 (Met-1) is an N-acetylmethionine. The 224-residue stretch at 28–251 folds into the RNase H type-2 domain; it reads PCVLGVDEAG…AQAILEKEAE (224 aa). A divalent metal cation is bound by residues Asp-34, Glu-35, and Asp-142. Thr-217 carries the post-translational modification Phosphothreonine. The residue at position 258 (Ser-258) is a Phosphoserine.

The protein belongs to the RNase HII family. Eukaryotic subfamily. The RNase H2 complex is a heterotrimer composed of the catalytic subunit RNASEH2A and the non-catalytic subunits RNASEH2B and RNASEH2C. It depends on Mn(2+) as a cofactor. The cofactor is Mg(2+).

The protein localises to the nucleus. It carries out the reaction Endonucleolytic cleavage to 5'-phosphomonoester.. Functionally, catalytic subunit of RNase HII, an endonuclease that specifically degrades the RNA of RNA:DNA hybrids. Participates in DNA replication, possibly by mediating the removal of lagging-strand Okazaki fragment RNA primers during DNA replication. Mediates the excision of single ribonucleotides from DNA:RNA duplexes. The sequence is that of Ribonuclease H2 subunit A (Rnaseh2a) from Rattus norvegicus (Rat).